Here is a 379-residue protein sequence, read N- to C-terminus: Probable G-protein coupled receptor 27 (379 aa).

Residues 1–26 (MANASEPGGGGSGGGAEAAALGLRLA) are Extracellular-facing. The N-linked (GlcNAc...) asparagine glycan is linked to N3. A helical membrane pass occupies residues 27-47 (TLSLLLCVSLAGNVLFALLIV). Topologically, residues 48–58 (RERSLHRAPYY) are cytoplasmic. A helical membrane pass occupies residues 59-79 (LLLDLCLADGLRALACLPAVM). The Extracellular segment spans residues 80-100 (LAARRAAAAAGTPPGALGCKL). The cysteines at positions 98 and 175 are disulfide-linked. A helical membrane pass occupies residues 101-121 (LAFLAALFCFHAAFLLLGVGV). Topologically, residues 122–142 (TRYLAIAHHRFYAERLAGWPC) are cytoplasmic. A helical membrane pass occupies residues 143–163 (AAMLVCAAWALALAAAFPPVL). At 164–185 (DGGGADDEDAPCALEQRPDGAP) the chain is on the extracellular side. Residues 186–206 (GALGFLLLLAAVVGATHLVYL) form a helical membrane-spanning segment. Residues 207 to 289 (RLLFFIHDRR…FKTEKRLCKM (83 aa)) are Cytoplasmic-facing. Residues 290–310 (FYAITLLFLLLWGPYVVASYL) traverse the membrane as a helical segment. The Extracellular portion of the chain corresponds to 311 to 324 (RVLVRPGAVPQAYL). Residues 325-345 (TASVWLTFAQAGINPVVCFLF) form a helical membrane-spanning segment. The Cytoplasmic segment spans residues 346 to 379 (NRELRDCFRAQFPCCQSPQATQATLPCDLKGIGL).

It belongs to the G-protein coupled receptor 1 family.

Its subcellular location is the cell membrane. Functionally, orphan receptor. Possible candidate for amine-like G-protein coupled receptor. The sequence is that of Probable G-protein coupled receptor 27 (Gpr27) from Mus musculus (Mouse).